Here is a 399-residue protein sequence, read N- to C-terminus: 4-hydroxy-3-methylbut-2-enyl diphosphate reductase (399 aa).

A [4Fe-4S] cluster-binding site is contributed by Cys-66. Residue His-96 coordinates (2E)-4-hydroxy-3-methylbut-2-enyl diphosphate. A dimethylallyl diphosphate-binding site is contributed by His-96. His-96 lines the isopentenyl diphosphate pocket. [4Fe-4S] cluster is bound at residue Cys-157. A (2E)-4-hydroxy-3-methylbut-2-enyl diphosphate-binding site is contributed by His-185. Position 185 (His-185) interacts with dimethylallyl diphosphate. His-185 provides a ligand contact to isopentenyl diphosphate. Glu-187 (proton donor) is an active-site residue. Residue Thr-250 coordinates (2E)-4-hydroxy-3-methylbut-2-enyl diphosphate. Cys-288 contacts [4Fe-4S] cluster. The (2E)-4-hydroxy-3-methylbut-2-enyl diphosphate site is built by Ser-317, Ser-318, Asn-319, and Ser-380. The dimethylallyl diphosphate site is built by Ser-317, Ser-318, Asn-319, and Ser-380. The isopentenyl diphosphate site is built by Ser-317, Ser-318, Asn-319, and Ser-380.

This sequence belongs to the IspH family. It depends on [4Fe-4S] cluster as a cofactor.

It carries out the reaction isopentenyl diphosphate + 2 oxidized [2Fe-2S]-[ferredoxin] + H2O = (2E)-4-hydroxy-3-methylbut-2-enyl diphosphate + 2 reduced [2Fe-2S]-[ferredoxin] + 2 H(+). It catalyses the reaction dimethylallyl diphosphate + 2 oxidized [2Fe-2S]-[ferredoxin] + H2O = (2E)-4-hydroxy-3-methylbut-2-enyl diphosphate + 2 reduced [2Fe-2S]-[ferredoxin] + 2 H(+). Its pathway is isoprenoid biosynthesis; dimethylallyl diphosphate biosynthesis; dimethylallyl diphosphate from (2E)-4-hydroxy-3-methylbutenyl diphosphate: step 1/1. It participates in isoprenoid biosynthesis; isopentenyl diphosphate biosynthesis via DXP pathway; isopentenyl diphosphate from 1-deoxy-D-xylulose 5-phosphate: step 6/6. Functionally, catalyzes the conversion of 1-hydroxy-2-methyl-2-(E)-butenyl 4-diphosphate (HMBPP) into a mixture of isopentenyl diphosphate (IPP) and dimethylallyl diphosphate (DMAPP). Acts in the terminal step of the DOXP/MEP pathway for isoprenoid precursor biosynthesis. This chain is 4-hydroxy-3-methylbut-2-enyl diphosphate reductase, found in Parasynechococcus marenigrum (strain WH8102).